Consider the following 226-residue polypeptide: ATP synthase F(0) complex subunit a (226 aa).

Helical transmembrane passes span 12 to 32, 68 to 88, 97 to 117, 138 to 158, 164 to 184, and 189 to 209; these read PTVL…LLVP, WSLM…LGLF, QLSM…AMGL, IPML…ALAV, ITAG…MLTI, and TLIT…VALI.

The protein belongs to the ATPase A chain family. Component of the ATP synthase complex composed at least of ATP5F1A/subunit alpha, ATP5F1B/subunit beta, ATP5MC1/subunit c (homooctomer), MT-ATP6/subunit a, MT-ATP8/subunit 8, ATP5ME/subunit e, ATP5MF/subunit f, ATP5MG/subunit g, ATP5MK/subunit k, ATP5MJ/subunit j, ATP5F1C/subunit gamma, ATP5F1D/subunit delta, ATP5F1E/subunit epsilon, ATP5PF/subunit F6, ATP5PB/subunit b, ATP5PD/subunit d, ATP5PO/subunit OSCP. ATP synthase complex consists of a soluble F(1) head domain (subunits alpha(3) and beta(3)) - the catalytic core - and a membrane F(0) domain - the membrane proton channel (subunits c, a, 8, e, f, g, k and j). These two domains are linked by a central stalk (subunits gamma, delta, and epsilon) rotating inside the F1 region and a stationary peripheral stalk (subunits F6, b, d, and OSCP). Interacts with DNAJC30; interaction is direct.

The protein resides in the mitochondrion inner membrane. It catalyses the reaction H(+)(in) = H(+)(out). Its function is as follows. Subunit a, of the mitochondrial membrane ATP synthase complex (F(1)F(0) ATP synthase or Complex V) that produces ATP from ADP in the presence of a proton gradient across the membrane which is generated by electron transport complexes of the respiratory chain. ATP synthase complex consist of a soluble F(1) head domain - the catalytic core - and a membrane F(1) domain - the membrane proton channel. These two domains are linked by a central stalk rotating inside the F(1) region and a stationary peripheral stalk. During catalysis, ATP synthesis in the catalytic domain of F(1) is coupled via a rotary mechanism of the central stalk subunits to proton translocation. With the subunit c (ATP5MC1), forms the proton-conducting channel in the F(0) domain, that contains two crucial half-channels (inlet and outlet) that facilitate proton movement from the mitochondrial intermembrane space (IMS) into the matrix. Protons are taken up via the inlet half-channel and released through the outlet half-channel, following a Grotthuss mechanism. This Pongo pygmaeus (Bornean orangutan) protein is ATP synthase F(0) complex subunit a.